Consider the following 144-residue polypeptide: C-C motif chemokine 25 (144 aa).

The N-terminal stretch at 1–23 (MKLWLFACLVACFVGAWMPVVHA) is a signal peptide. 2 cysteine pairs are disulfide-bonded: Cys-30–Cys-58 and Cys-31–Cys-73. Residues 98 to 144 (KSASDSQTERKKSNHMKSKVENPNSTSVRSATLGHPRMVMMPRKTNN) are disordered. The span at 118–127 (ENPNSTSVRS) shows a compositional bias: polar residues.

It belongs to the intercrine beta (chemokine CC) family. As to expression, specifically expressed by thymic dendritic cells. High levels in thymus and small intestine.

The protein resides in the secreted. In terms of biological role, potentially involved in T-cell development. Recombinant protein shows chemotactic activity on thymocytes, macrophages, THP-1 cells, and dendritics cells but is inactive on peripheral blood lymphocytes and neutrophils. Binds to CCR9. Binds to atypical chemokine receptor ACKR4 and mediates the recruitment of beta-arrestin (ARRB1/2) to ACKR4. The polypeptide is C-C motif chemokine 25 (Ccl25) (Mus musculus (Mouse)).